The chain runs to 573 residues: Methionine--tRNA ligase (573 aa).

The 'HIGH' region signature appears at P11 to N21. Zn(2+)-binding residues include C143, C146, C156, and C159. The 'KMSKS' region signature appears at Q346–S350. T349 lines the ATP pocket.

Belongs to the class-I aminoacyl-tRNA synthetase family. MetG type 1 subfamily. In terms of assembly, monomer. The cofactor is Zn(2+).

It localises to the cytoplasm. It catalyses the reaction tRNA(Met) + L-methionine + ATP = L-methionyl-tRNA(Met) + AMP + diphosphate. Its function is as follows. Is required not only for elongation of protein synthesis but also for the initiation of all mRNA translation through initiator tRNA(fMet) aminoacylation. The chain is Methionine--tRNA ligase from Ruegeria sp. (strain TM1040) (Silicibacter sp.).